A 306-amino-acid polypeptide reads, in one-letter code: tRNA dimethylallyltransferase (306 aa).

12–19 (GPTASGKT) provides a ligand contact to ATP. 14–19 (TASGKT) contacts substrate. Interaction with substrate tRNA stretches follow at residues 37–40 (DSAL), 161–165 (QRLSR), and 242–247 (RCVGYR).

The protein belongs to the IPP transferase family. As to quaternary structure, monomer. Mg(2+) serves as cofactor.

It catalyses the reaction adenosine(37) in tRNA + dimethylallyl diphosphate = N(6)-dimethylallyladenosine(37) in tRNA + diphosphate. Its function is as follows. Catalyzes the transfer of a dimethylallyl group onto the adenine at position 37 in tRNAs that read codons beginning with uridine, leading to the formation of N6-(dimethylallyl)adenosine (i(6)A). The polypeptide is tRNA dimethylallyltransferase (Shewanella amazonensis (strain ATCC BAA-1098 / SB2B)).